A 226-amino-acid chain; its full sequence is Low-molecular weight cobalt-containing nitrile hydratase subunit beta (226 aa).

Residues 1–22 (MDGIHDLGGRAGLGPIKPESDE) are disordered.

Belongs to the nitrile hydratase subunit beta family. As to quaternary structure, heterodimer of an alpha and a beta chain.

The catalysed reaction is an aliphatic primary amide = an aliphatic nitrile + H2O. Its function is as follows. NHase catalyzes the hydration of various nitrile compounds to the corresponding amides. In Rhodococcus rhodochrous, this protein is Low-molecular weight cobalt-containing nitrile hydratase subunit beta.